Here is a 375-residue protein sequence, read N- to C-terminus: DnaJ homolog subfamily B member 12 (375 aa).

N-acetylmethionine is present on Met-1. The Cytoplasmic segment spans residues 1–243; that stretch reads MESNKDEAER…DRRDNQGDGG (243 aa). The disordered stretch occupies residues 45-92; the sequence is ALIESLNQKPQTAGDQPPPTDTTHATHRKAGGTDAPSANGEAGGESTK. The segment covering 49–58 has biased composition (polar residues); sequence SLNQKPQTAG. The J domain occupies 112–176; sequence YEILGVSRGA…RKQYDQFGDD (65 aa). The residue at position 185 (His-185) is a Pros-methylhistidine. A helical transmembrane segment spans residues 244–264; the sequence is LGVFVQLMPILILILVSALSQ. Topologically, residues 265-375 are lumenal; that stretch reads LMVSSPPYSL…LSEVQASLHG (111 aa).

It belongs to the DnaJ family. DNAJB12/DNAJB14 subfamily. As to quaternary structure, homodimer and homotetramer. Interacts (via J domain) with HSPA8/Hsc70. Forms a multiprotein complex, at least composed of DNAJB12, DNAJB14, HSPA8/Hsc70 and SGTA; interaction with DNAJB14 and HSPA8/Hsc70 is direct. In terms of processing, methylated at His-185 by METTL9.

The protein resides in the endoplasmic reticulum membrane. The protein localises to the nucleus membrane. In terms of biological role, acts as a co-chaperone with HSPA8/Hsc70; required to promote protein folding and trafficking, prevent aggregation of client proteins, and promote unfolded proteins to endoplasmic reticulum-associated degradation (ERAD) pathway. Acts by determining HSPA8/Hsc70's ATPase and polypeptide-binding activities. Can also act independently of HSPA8/Hsc70: together with DNAJB14, acts as a chaperone that promotes maturation of potassium channels KCND2 and KCNH2 by stabilizing nascent channel subunits and assembling them into tetramers. While stabilization of nascent channel proteins is dependent on HSPA8/Hsc70, the process of oligomerization of channel subunits is independent of HSPA8/Hsc70. When overexpressed, forms membranous structures together with DNAJB14 and HSPA8/Hsc70 within the nucleus; the role of these structures, named DJANGOs, is still unclear. Functionally, (Microbial infection) In case of infection by polyomavirus, involved in the virus endoplasmic reticulum membrane penetration and infection. The chain is DnaJ homolog subfamily B member 12 from Homo sapiens (Human).